The primary structure comprises 352 residues: MDIVLEIWDTFIGDRVYSALLPLSLSSTVSLPGLTNAANSSLSLFGASKPFVYEPATQLFRLEPSKYAYLSAWPRNNIYRQFLSFFLIVWIFGIIVYFISATLSYIFIWDKTTVKHPKFLKNQIPMEIAQTMRSMPVMSLLTAPFLVAEVRGYAKLYDSVDEEPFPYYSILQFPLFIAFTDFCIYWIHRGLHHPLIYKSLHKPHHKWIMPSPFASHAFHPLDGWSQSVPYHVFPFIFPLQKLAYVFLFGFINLWTVMIHDGEYVANSPIINGAACHTMHHLYFNYNYGQFTTLWDRLGGSYRKPNEELFRRETKMDEAEWKRQTKEMETILKTVEGEDDRKYLSQEEAKKDL.

Asparagine 39 carries N-linked (GlcNAc...) asparagine glycosylation. Transmembrane regions (helical) follow at residues 82 to 102, 128 to 147, and 167 to 187; these read FLSFFLIVWIFGIIVYFISAT, IAQTMRSMPVMSLLTAPFLV, and YYSILQFPLFIAFTDFCIYWI. Residues 174–299 enclose the Fatty acid hydroxylase domain; the sequence is PLFIAFTDFC…FTTLWDRLGG (126 aa). A Histidine box-1 motif is present at residues 188 to 192; sequence HRGLH. The Histidine box-2 motif lies at 201–205; the sequence is HKPHH. The chain crosses the membrane as a helical span at residues 231 to 251; that stretch reads HVFPFIFPLQKLAYVFLFGFI. Residues 276–280 carry the Histidine box-3 motif; it reads HTMHH.

This sequence belongs to the sterol desaturase family. Fe cation is required as a cofactor.

It is found in the endoplasmic reticulum membrane. Functionally, delta(7)-sterol 5(6)-desaturase; part of the third module of ergosterol biosynthesis pathway that includes the late steps of the pathway. Erg3A is a minor delta(7)-sterol 5(6)-desaturase within the ergosterol pathway, erg3B being the major one. The third module or late pathway involves the ergosterol synthesis itself through consecutive reactions that mainly occur in the endoplasmic reticulum (ER) membrane. Firstly, the squalene synthase erg9 catalyzes the condensation of 2 farnesyl pyrophosphate moieties to form squalene, which is the precursor of all steroids. Squalene synthase is crucial for balancing the incorporation of farnesyl diphosphate (FPP) into sterol and nonsterol isoprene synthesis. Secondly, squalene is converted into lanosterol by the consecutive action of the squalene epoxidase erg1 and the lanosterol synthase erg7. Then, the delta(24)-sterol C-methyltransferase erg6 methylates lanosterol at C-24 to produce eburicol. Eburicol is the substrate of the sterol 14-alpha demethylase encoded by cyp51A and cyp51B, to yield 4,4,24-trimethyl ergosta-8,14,24(28)-trienol. The C-14 reductase erg24 then reduces the C14=C15 double bond which leads to 4,4-dimethylfecosterol. A sequence of further demethylations at C-4, involving the C-4 demethylation complex containing the C-4 methylsterol oxidases erg25A or erg25B, the sterol-4-alpha-carboxylate 3-dehydrogenase erg26 and the 3-keto-steroid reductase erg27, leads to the production of fecosterol via 4-methylfecosterol. The C-8 sterol isomerase erg2 then catalyzes the reaction which results in unsaturation at C-7 in the B ring of sterols and thus converts fecosterol to episterol. The sterol-C5-desaturase erg3B then catalyzes the introduction of a C-5 double bond in the B ring to produce 5-dehydroepisterol. The 2 other sterol-C5-desaturases, erg3A and erg3C, seem to be less important in ergosterol biosynthesis. The C-22 sterol desaturase erg5 further converts 5-dehydroepisterol into ergosta-5,7,22,24(28)-tetraen-3beta-ol by forming the C-22(23) double bond in the sterol side chain. Finally, ergosta-5,7,22,24(28)-tetraen-3beta-ol is substrate of the C-24(28) sterol reductases erg4A and erg4B to produce ergosterol. Possible alternative sterol biosynthetic pathways might exist from fecosterol to ergosterol, depending on the activities of the erg3 isoforms. This is Delta(7)-sterol 5(6)-desaturas erg3A from Aspergillus fumigatus (strain ATCC MYA-4609 / CBS 101355 / FGSC A1100 / Af293) (Neosartorya fumigata).